The primary structure comprises 204 residues: 3-isopropylmalate dehydratase small subunit (204 aa).

The protein belongs to the LeuD family. LeuD type 1 subfamily. In terms of assembly, heterodimer of LeuC and LeuD.

The enzyme catalyses (2R,3S)-3-isopropylmalate = (2S)-2-isopropylmalate. It participates in amino-acid biosynthesis; L-leucine biosynthesis; L-leucine from 3-methyl-2-oxobutanoate: step 2/4. Catalyzes the isomerization between 2-isopropylmalate and 3-isopropylmalate, via the formation of 2-isopropylmaleate. This is 3-isopropylmalate dehydratase small subunit from Clavibacter michiganensis subsp. michiganensis (strain NCPPB 382).